Reading from the N-terminus, the 124-residue chain is V-type proton ATPase subunit F 1 (124 aa).

This sequence belongs to the V-ATPase F subunit family. V-ATPase is a heteromultimeric enzyme made up of two complexes: the ATP-hydrolytic V1 complex and the proton translocation V0 complex. The V1 complex consists of three catalytic AB heterodimers that form a heterohexamer, three peripheral stalks each consisting of EG heterodimers, one central rotor including subunits D and F, and the regulatory subunits C and H. The proton translocation complex V0 consists of the proton transport subunit a, a ring of proteolipid subunits c9c'', rotary subunit d, subunits e and f, and the accessory subunits VhaAC45 and ATP6AP2.

Subunit of the V1 complex of vacuolar(H+)-ATPase (V-ATPase), a multisubunit enzyme composed of a peripheral complex (V1) that hydrolyzes ATP and a membrane integral complex (V0) that translocates protons. V-ATPase is responsible for acidifying and maintaining the pH of intracellular compartments and in some cell types, is targeted to the plasma membrane, where it is responsible for acidifying the extracellular environment. This Drosophila pseudoobscura pseudoobscura (Fruit fly) protein is V-type proton ATPase subunit F 1 (Vha14).